The sequence spans 413 residues: Transmembrane protein 184A (413 aa).

7 helical membrane passes run 47–69 (WLFL…ALVL), 93–113 (LLLI…LLGD), 130–150 (FVIY…GAIM), 187–207 (LQFC…QAFG), 223–243 (VTLI…LFYF), 258–278 (FLTI…LAIL), and 300–320 (LAAG…SVAL). A disordered region spans residues 372-413 (QHYTQQATHEAPRPGTHPSGGSGGSRKSRSLEKRMLIPSEDL).

It belongs to the TMEM184 family. As to expression, expressed in vascular cells (at protein level).

It is found in the cell membrane. The protein localises to the cytoplasm. Its subcellular location is the perinuclear region. It localises to the cytoplasmic vesicle membrane. The protein resides in the early endosome membrane. It is found in the endosome. The protein localises to the cytoplasmic vesicle. Its subcellular location is the secretory vesicle membrane. Functionally, acts as a heparin receptor in vascular cells. May be involved in vesicle transport in exocrine cells and Sertoli cells. In Homo sapiens (Human), this protein is Transmembrane protein 184A (TMEM184A).